Reading from the N-terminus, the 341-residue chain is Muscleblind-like protein 1 (341 aa).

Thr-6 bears the Phosphothreonine mark. 4 consecutive C3H1-type zinc fingers follow at residues 13–41 (WLTL…HPSK), 47–73 (NGRV…HPPP), 178–206 (TDRL…HPAD), and 214–240 (DNTV…HPPA).

The protein belongs to the muscleblind family. As to quaternary structure, interacts with DDX1 and YBX1. Interacts with HNRNPH1; the interaction in RNA-independent. Interacts with RBPMS; the interaction allows cooperative assembly of RNA-bound stable cell-specific alternative splicing regulatory complexes. In terms of tissue distribution, highly expressed in cardiac and skeletal muscle. Weakly expressed in heart and eye (at protein level).

The protein resides in the nucleus. It localises to the cytoplasm. The protein localises to the cytoplasmic granule. Mediates pre-mRNA alternative splicing regulation. Acts either as activator or repressor of splicing on specific pre-mRNA targets. Inhibits cardiac troponin-T (TNNT2) pre-mRNA exon inclusion but induces insulin receptor (IR) pre-mRNA exon inclusion in muscle. Antagonizes the alternative splicing activity pattern of CELF proteins. Regulates the TNNT2 exon 5 skipping through competition with U2AF2. Inhibits the formation of the spliceosome A complex on intron 4 of TNNT2 pre-mRNA. Binds to the stem-loop structure within the polypyrimidine tract of TNNT2 intron 4 during spliceosome assembly. Binds to the 5'-YGCU(U/G)Y-3'consensus sequence. Binds to the IR RNA. Binds to CUG triplet repeat expansion in myotonic dystrophy muscle cells by sequestering the target RNAs. Together with RNA binding proteins RBPMS and RBFOX2, activates vascular smooth muscle cells alternative splicing events. Regulates NCOR2 alternative splicing. The polypeptide is Muscleblind-like protein 1 (Mbnl1) (Mus musculus (Mouse)).